Reading from the N-terminus, the 57-residue chain is Large ribosomal subunit protein bL32 (57 aa).

Residues 1-38 (MAVQQNKPTRSKRGMRRSHDALTAVTSLSVDKTSGEKH) form a disordered region.

This sequence belongs to the bacterial ribosomal protein bL32 family.

The chain is Large ribosomal subunit protein bL32 from Escherichia coli O7:K1 (strain IAI39 / ExPEC).